The following is a 1357-amino-acid chain: DNA-directed RNA polymerase subunit beta (1357 aa).

Belongs to the RNA polymerase beta chain family. The RNAP catalytic core consists of 2 alpha, 1 beta, 1 beta' and 1 omega subunit. When a sigma factor is associated with the core the holoenzyme is formed, which can initiate transcription.

The enzyme catalyses RNA(n) + a ribonucleoside 5'-triphosphate = RNA(n+1) + diphosphate. Functionally, DNA-dependent RNA polymerase catalyzes the transcription of DNA into RNA using the four ribonucleoside triphosphates as substrates. The sequence is that of DNA-directed RNA polymerase subunit beta from Nitrosomonas europaea (strain ATCC 19718 / CIP 103999 / KCTC 2705 / NBRC 14298).